A 206-amino-acid polypeptide reads, in one-letter code: Small ribosomal subunit protein uS4 (206 aa).

An S4 RNA-binding domain is found at 96-158 (GRLDNVVYRM…AKKQSRIKAA (63 aa)).

Belongs to the universal ribosomal protein uS4 family. Part of the 30S ribosomal subunit. Contacts protein S5. The interaction surface between S4 and S5 is involved in control of translational fidelity.

Functionally, one of the primary rRNA binding proteins, it binds directly to 16S rRNA where it nucleates assembly of the body of the 30S subunit. With S5 and S12 plays an important role in translational accuracy. In Vibrio cholerae serotype O1 (strain ATCC 39541 / Classical Ogawa 395 / O395), this protein is Small ribosomal subunit protein uS4.